The sequence spans 440 residues: MNPSQILENLKKELNENEYENYLSNLKFNEKQSKADLLVFNAPNELMAKFIQTKYGKKIAHFYEVQSGNKAIINIQAQSAKQSNKSTKIDIAHIKAQSTILNPSFTFDSFVVGDSNKYAYGACKAITHKDKLGKLYNPIFVYGPTGLGKTHLLQAVGNASLEMGKKVIYATSENFINDFTSNLKNGSLDKFHEKYRNCDVLLIDDVQFLGKTDKIQEEFFFIFNEIKNNDGQIIMTSDNPPNMLKGITERLKSRFAHGIIADITPPQLDTKIAIIRKKCEFNDINLSNDIINYIATSLGDNIREIEGIIISLNAYATILGQEITLELAKSVMKDHIKEKKENITIDDILSLVCKEFNIKPSDVKSNKKTQNIVTARRIVIYLARALTALTMPQLANYFEMKDHTAISHNVKKITEMIENDASLKAKIEELKNKILVKSQS.

Residues 1-74 form a domain I, interacts with DnaA modulators region; sequence MNPSQILENL…VQSGNKAIIN (74 aa). A domain II region spans residues 74–99; it reads NIQAQSAKQSNKSTKIDIAHIKAQST. Positions 100-316 are domain III, AAA+ region; sequence ILNPSFTFDS…GIIISLNAYA (217 aa). 4 residues coordinate ATP: G146, G148, K149, and T150. The tract at residues 317-440 is domain IV, binds dsDNA; sequence TILGQEITLE…KNKILVKSQS (124 aa).

Belongs to the DnaA family. As to quaternary structure, oligomerizes as a right-handed, spiral filament on DNA at oriC.

It is found in the cytoplasm. Plays an essential role in the initiation and regulation of chromosomal replication. ATP-DnaA binds to the origin of replication (oriC) to initiate formation of the DNA replication initiation complex once per cell cycle. Binds the DnaA box (a 9 base pair repeat at the origin) and separates the double-stranded (ds)DNA. Forms a right-handed helical filament on oriC DNA; dsDNA binds to the exterior of the filament while single-stranded (ss)DNA is stabiized in the filament's interior. The ATP-DnaA-oriC complex binds and stabilizes one strand of the AT-rich DNA unwinding element (DUE), permitting loading of DNA polymerase. After initiation quickly degrades to an ADP-DnaA complex that is not apt for DNA replication. Binds acidic phospholipids. The polypeptide is Chromosomal replication initiator protein DnaA (Campylobacter jejuni subsp. jejuni serotype O:23/36 (strain 81-176)).